Here is a 99-residue protein sequence, read N- to C-terminus: Essential MCU regulator, mitochondrial (99 aa).

The transit peptide at Met1 to Thr39 directs the protein to the mitochondrion. Over Ala40 to Phe57 the chain is Mitochondrial matrix. The chain crosses the membrane as a helical span at residues Gly58–Ser77. Over Lys78–Asp99 the chain is Mitochondrial intermembrane.

The protein belongs to the SMDT1/EMRE family. Component of the uniplex complex.

It is found in the mitochondrion inner membrane. Essential regulatory subunit of the mitochondrial calcium uniporter complex (uniplex), a complex that mediates calcium uptake into mitochondria. Required to bridge the calcium-sensing proteins micu1 with the calcium-conducting subunit mcu. Acts by mediating activation of mcu and retention of micu1 to the mcu pore, in order to ensure tight regulation of the uniplex complex and appropriate responses to intracellular calcium signaling. This chain is Essential MCU regulator, mitochondrial, found in Xenopus tropicalis (Western clawed frog).